The chain runs to 575 residues: Urease subunit alpha (575 aa).

The region spanning 137–575 (GGIDSHIHWI…LPMAQRYFLF (439 aa)) is the Urease domain. Residues histidine 142, histidine 144, and lysine 225 each coordinate Ni(2+). Position 225 is an N6-carboxylysine (lysine 225). Histidine 227 contacts substrate. Ni(2+) contacts are provided by histidine 254 and histidine 280. The active-site Proton donor is the histidine 328. Ni(2+) is bound at residue aspartate 368.

The protein belongs to the metallo-dependent hydrolases superfamily. Urease alpha subunit family. As to quaternary structure, heterotrimer of UreA (gamma), UreB (beta) and UreC (alpha) subunits. Three heterotrimers associate to form the active enzyme. Requires Ni cation as cofactor. In terms of processing, carboxylation allows a single lysine to coordinate two nickel ions.

It is found in the cytoplasm. It carries out the reaction urea + 2 H2O + H(+) = hydrogencarbonate + 2 NH4(+). It functions in the pathway nitrogen metabolism; urea degradation; CO(2) and NH(3) from urea (urease route): step 1/1. The polypeptide is Urease subunit alpha (Leptothrix cholodnii (strain ATCC 51168 / LMG 8142 / SP-6) (Leptothrix discophora (strain SP-6))).